The primary structure comprises 642 residues: uncharacterized protein (642 aa).

Topologically, residues 1 to 15 are cytoplasmic; that stretch reads MVHITLGQAIWVSVK. The chain crosses the membrane as a helical span at residues 16-36; sequence PIIKIYLIIGVGFLMAKMGIL. Topologically, residues 37 to 42 are extracellular; sequence TVEATR. Residues 43–63 form a helical membrane-spanning segment; it reads IISDIVLTVLLPSLSFNKIVA. Residues 64–73 lie on the Cytoplasmic side of the membrane; it reads NIEDKDIKSV. The helical transmembrane segment at 74 to 94 threads the bilayer; sequence GIICLSALLIFGSGFFFAYVV. Residues 95–104 lie on the Extracellular side of the membrane; sequence RLFLPVPKQW. A helical transmembrane segment spans residues 105-125; the sequence is YGGILAGGMFPNISDLPIAYL. Residues 126–142 are Cytoplasmic-facing; the sequence is QSMDQGLVFSEEEGNKG. A helical transmembrane segment spans residues 143-163; it reads VANVIIFLTMFLICIFNLGGF. Residues 164–460 are Extracellular-facing; it reads RLIESDFEYN…FLKNCLRPCS (297 aa). Disordered stretches follow at residues 183-206 and 227-324; these read ETTKTQPAVSANTTNTDTSERFFS and GTKG…SQPR. 2 stretches are compositionally biased toward polar residues: residues 240–260 and 272–312; these read RRSTNSIAPLSLPDTSSNSKI and IACT…SSID. The chain crosses the membrane as a helical span at residues 461 to 481; that stretch reads MAVIIALTVAFIPWVKALFVT. Over 482–499 the chain is Cytoplasmic; sequence TANTPHISQAPDNAPPLS. A helical membrane pass occupies residues 500 to 520; the sequence is FFMDFTGYVGAACVPFGLILL. Over 521–538 the chain is Extracellular; sequence GATLGRLKIGNLYPGFWK. A helical transmembrane segment spans residues 539–559; sequence AAVTLVILRQCVMPIFGVLWC. Over 560–574 the chain is Cytoplasmic; the sequence is DRLVKAGWVNWQDDR. Residues 575 to 595 traverse the membrane as a helical segment; sequence MLLFVIAISWNLPTMTTLIYF. Residues 596–614 are Extracellular-facing; that stretch reads TASFTPPETTAPIQMECVS. The helical transmembrane segment at 615–635 threads the bilayer; that stretch reads FFLMLQYPLMVVSLPFLVSYF. Residues 636–642 lie on the Cytoplasmic side of the membrane; that stretch reads LKVQMNL.

This sequence belongs to the auxin efflux carrier (TC 2.A.69) family.

It localises to the membrane. This is an uncharacterized protein from Saccharomyces cerevisiae (strain ATCC 204508 / S288c) (Baker's yeast).